Here is a 199-residue protein sequence, read N- to C-terminus: Adenylyl-sulfate kinase (199 aa).

35-42 provides a ligand contact to ATP; it reads GLSGSGKS. The active-site Phosphoserine intermediate is the Ser-109.

This sequence belongs to the APS kinase family.

It carries out the reaction adenosine 5'-phosphosulfate + ATP = 3'-phosphoadenylyl sulfate + ADP + H(+). Its pathway is sulfur metabolism; hydrogen sulfide biosynthesis; sulfite from sulfate: step 2/3. In terms of biological role, catalyzes the synthesis of activated sulfate. This Clostridium kluyveri (strain ATCC 8527 / DSM 555 / NBRC 12016 / NCIMB 10680 / K1) protein is Adenylyl-sulfate kinase.